A 275-amino-acid chain; its full sequence is 4-hydroxy-3-methylbut-2-enyl diphosphate reductase (275 aa).

[4Fe-4S] cluster is bound at residue Cys-12. 2 residues coordinate (2E)-4-hydroxy-3-methylbut-2-enyl diphosphate: His-36 and His-70. His-36 and His-70 together coordinate dimethylallyl diphosphate. The isopentenyl diphosphate site is built by His-36 and His-70. Cys-92 contributes to the [4Fe-4S] cluster binding site. A (2E)-4-hydroxy-3-methylbut-2-enyl diphosphate-binding site is contributed by His-120. His-120 lines the dimethylallyl diphosphate pocket. His-120 serves as a coordination point for isopentenyl diphosphate. Glu-122 serves as the catalytic Proton donor. (2E)-4-hydroxy-3-methylbut-2-enyl diphosphate is bound at residue Thr-158. Cys-186 contacts [4Fe-4S] cluster. Residues Ser-214, Ser-215, Asn-216, and Ser-258 each coordinate (2E)-4-hydroxy-3-methylbut-2-enyl diphosphate. Dimethylallyl diphosphate is bound by residues Ser-214, Ser-215, Asn-216, and Ser-258. Positions 214, 215, 216, and 258 each coordinate isopentenyl diphosphate.

Belongs to the IspH family. [4Fe-4S] cluster is required as a cofactor.

The catalysed reaction is isopentenyl diphosphate + 2 oxidized [2Fe-2S]-[ferredoxin] + H2O = (2E)-4-hydroxy-3-methylbut-2-enyl diphosphate + 2 reduced [2Fe-2S]-[ferredoxin] + 2 H(+). It catalyses the reaction dimethylallyl diphosphate + 2 oxidized [2Fe-2S]-[ferredoxin] + H2O = (2E)-4-hydroxy-3-methylbut-2-enyl diphosphate + 2 reduced [2Fe-2S]-[ferredoxin] + 2 H(+). The protein operates within isoprenoid biosynthesis; dimethylallyl diphosphate biosynthesis; dimethylallyl diphosphate from (2E)-4-hydroxy-3-methylbutenyl diphosphate: step 1/1. It participates in isoprenoid biosynthesis; isopentenyl diphosphate biosynthesis via DXP pathway; isopentenyl diphosphate from 1-deoxy-D-xylulose 5-phosphate: step 6/6. Its function is as follows. Catalyzes the conversion of 1-hydroxy-2-methyl-2-(E)-butenyl 4-diphosphate (HMBPP) into a mixture of isopentenyl diphosphate (IPP) and dimethylallyl diphosphate (DMAPP). Acts in the terminal step of the DOXP/MEP pathway for isoprenoid precursor biosynthesis. This is 4-hydroxy-3-methylbut-2-enyl diphosphate reductase from Campylobacter hominis (strain ATCC BAA-381 / DSM 21671 / CCUG 45161 / LMG 19568 / NCTC 13146 / CH001A).